Reading from the N-terminus, the 340-residue chain is MREPEFWRRRSLLSLLLMPLAALYGAIAASRMRKPGRSIAVPVICVGNYHGGGAGKTPTTLTLVALLRELDETPVVLSRGYGGSLNGPVEVDPDRHSAAEVGDEPLMMARSVPVVVAKDRVAGATLAMSRRASVIVMDDGFQNPALAKDVSLIVIDARRGIGNGRVIPSGPLRAPLPLQCERTDALLIIGAGSAADPVAARLKSKGVPTLRGHLAPDPACVEALRGRAVLAFAGIGDPERFFATLRASGIEVAAERPFPDHHPYSGDDVAALLDRARRDGLTLVTTEKDLARLGDQPQLAEAGLTALPVTLALEDEAGFRRFVIAQLGAARDRRFRGNRR.

His50–Thr57 contributes to the ATP binding site.

It belongs to the LpxK family.

It catalyses the reaction a lipid A disaccharide + ATP = a lipid IVA + ADP + H(+). The protein operates within glycolipid biosynthesis; lipid IV(A) biosynthesis; lipid IV(A) from (3R)-3-hydroxytetradecanoyl-[acyl-carrier-protein] and UDP-N-acetyl-alpha-D-glucosamine: step 6/6. In terms of biological role, transfers the gamma-phosphate of ATP to the 4'-position of a tetraacyldisaccharide 1-phosphate intermediate (termed DS-1-P) to form tetraacyldisaccharide 1,4'-bis-phosphate (lipid IVA). This chain is Tetraacyldisaccharide 4'-kinase, found in Rhodopseudomonas palustris (strain BisA53).